The primary structure comprises 67 residues: Kappa-conotoxin-like 2 (67 aa).

A signal peptide spans 1–26; it reads MMFRLTSVSCFLLVIACLNLFQVVLT. 4 cysteine pairs are disulfide-bonded: C29/C43, C36/C48, C42/C51, and C47/C55. Phenylalanine amide is present on F59. A propeptide spanning residues 63 to 67 is cleaved from the precursor; that stretch reads ATFQE.

Belongs to the conotoxin I2 superfamily. In terms of tissue distribution, expressed by the venom duct.

It is found in the secreted. Inhibits the vertebrate voltage-gated potassium channels Kv1.1/KCNA1 and Kv1.3/KCNA3. This is Kappa-conotoxin-like 2 from Conus vexillum (Flag cone).